A 926-amino-acid chain; its full sequence is Vacuolar protein sorting-associated protein 39 homolog (926 aa).

One can recognise a CNH domain in the interval 15-306 (PVEVTCLAFQ…MTLCSGARGQ (292 aa)). Residues 590-768 (DETEMARNLN…LFRTLVHPNQ (179 aa)) form a CHCR repeat.

This sequence belongs to the VAM6/VPS39 family. In terms of assembly, probable core component of the homotypic fusion and vacuole protein sorting (HOPS) complex consisting of the core class C Vps proteins vps-11, vps-16, vps-18, and which further associates with vps-33.1, vps-39 and vps-41. May interact with lgg-2. Interacts with cuti-1.

Its subcellular location is the cytoplasm. It is found in the lysosome membrane. The protein localises to the late endosome membrane. The protein resides in the late endosome. It localises to the lysosome. In terms of biological role, plays a role in vesicle-mediated protein trafficking to lysosomal compartments including the endocytic membrane transport and autophagic pathways. Believed to act in part as a component of the putative HOPS endosomal tethering complex which is proposed to be involved in the rab-5-to-rab-7 endosome conversion probably implicating sand-1, and via binding SNAREs and SNARE complexes to mediate tethering and docking events during SNARE-mediated membrane fusion. The HOPS complex is proposed to be recruited to rab-7 on the late endosomal membrane and to regulate late endocytic, phagocytic and autophagic traffic towards lysosomes. Involved in homotypic vesicle fusions between late endosomes and in heterotypic fusions between late endosomes and lysosomes. Required for fusion of endosomes. In association with lgg-2 mediates the tethering of autophagosomes with lysosomes to form autolysosomes. Within the HOPS complex, contributes to the normal development of gut granules in embryonic and adult intestinal cells. The polypeptide is Vacuolar protein sorting-associated protein 39 homolog (Caenorhabditis elegans).